Reading from the N-terminus, the 157-residue chain is 6,7-dimethyl-8-ribityllumazine synthase 2 (157 aa).

Residues W21, A55–E57, and F79–V81 each bind 5-amino-6-(D-ribitylamino)uracil. The active-site Proton donor is R87. S112 serves as a coordination point for 5-amino-6-(D-ribitylamino)uracil. Residue H126 coordinates (2S)-2-hydroxy-3-oxobutyl phosphate.

The protein belongs to the DMRL synthase family. In terms of assembly, homodecamer, arranged as a dimer of pentamers.

It carries out the reaction (2S)-2-hydroxy-3-oxobutyl phosphate + 5-amino-6-(D-ribitylamino)uracil = 6,7-dimethyl-8-(1-D-ribityl)lumazine + phosphate + 2 H2O + H(+). The protein operates within cofactor biosynthesis; riboflavin biosynthesis; riboflavin from 2-hydroxy-3-oxobutyl phosphate and 5-amino-6-(D-ribitylamino)uracil: step 1/2. Catalyzes the formation of 6,7-dimethyl-8-ribityllumazine by condensation of 5-amino-6-(D-ribitylamino)uracil with 3,4-dihydroxy-2-butanone 4-phosphate. This is the penultimate step in the biosynthesis of riboflavin. This Mesorhizobium japonicum (strain LMG 29417 / CECT 9101 / MAFF 303099) (Mesorhizobium loti (strain MAFF 303099)) protein is 6,7-dimethyl-8-ribityllumazine synthase 2 (ribH2).